Here is a 757-residue protein sequence, read N- to C-terminus: MPVDKQAKRKKSISSNEVELLYTKSKTYLHPTTSKKDNIPGYLSLSRGANAANRDIIISFMSEKQLSSEELKAYENVDIADLQDDLEALKLGGTNSRSSGKRNLNIVSKPPTSSAFGFCFSIPISFVYSIQVRKPSVGWWFGSIIINTQDGEKLPIVFFHDDESPSTLKNQKVRNQRFDPFGDNGEMYWGGSDFMNALGKFADVQKSSVEPSVYLINPESNDLRNFAPFKEPKTAKTETNQEPFKLPDVNKFFANAKWKVLETVATFSAKTRNQVLDLVDENAPMPIKQIINKPEVQKIGNEFDSARVYLAKWAAQVKEEAEEAHRKYQLDDEIYNKINKELGVGSNTEILTDEEVSKTSRRKPISKVEWEGLFDFSGRLIISIDEIKDRIFHGGLEDCIRGEAWLFLLNVYPWDSSAEERKTLRNSFQTAYEEIKLKWVNDDDKRSVDFWKDQKHRIEKDINRTDRNLSIFQNKKKISISGVGSDRLPTTRESSPETPDEADDDEFDVSNITNPHLFKMREILLTYNEHNVNLGYVQGMTDLLSPLYVTFQDESLTFWAFVNFMDRMERNFLRDQSGMKNQMLTLNELVQFMLPDLFKHLEKCESTDLYFFFRMLLVWFKREFEWSSVLSLWEILWTDYYSGQFHLFFALAVLSDNERIIRQNLSRFDEVLKYMNDLSMNMNLNHLLIRAELLFLRFRRMIDIIDRENSLKKLNNPGVYDDANNSLIKISPALRELLSKKPVIQKETERPEGVGGG.

Residues 395 to 640 (GLEDCIRGEA…SLWEILWTDY (246 aa)) form the Rab-GAP TBC domain. Residues 482 to 507 (GVGSDRLPTTRESSPETPDEADDDEF) are disordered. Positions 498–507 (TPDEADDDEF) are enriched in acidic residues.

Its function is as follows. Most effectively accelerate the intrinsic GTPase activity of YPT7. It is also active, but to a lesser extent, on YPT31, YPT32 and YPT1. YPT6 and SEC4. This chain is GTPase-activating protein GYP7 (GYP7), found in Debaryomyces hansenii (strain ATCC 36239 / CBS 767 / BCRC 21394 / JCM 1990 / NBRC 0083 / IGC 2968) (Yeast).